Consider the following 316-residue polypeptide: Lipoyl synthase (316 aa).

[4Fe-4S] cluster is bound by residues Cys-61, Cys-66, Cys-72, Cys-87, Cys-91, Cys-94, and Ser-301. One can recognise a Radical SAM core domain in the interval 73 to 290 (FGKGTATFMI…ERAAIEMGFS (218 aa)).

The protein belongs to the radical SAM superfamily. Lipoyl synthase family. It depends on [4Fe-4S] cluster as a cofactor.

Its subcellular location is the cytoplasm. The catalysed reaction is [[Fe-S] cluster scaffold protein carrying a second [4Fe-4S](2+) cluster] + N(6)-octanoyl-L-lysyl-[protein] + 2 oxidized [2Fe-2S]-[ferredoxin] + 2 S-adenosyl-L-methionine + 4 H(+) = [[Fe-S] cluster scaffold protein] + N(6)-[(R)-dihydrolipoyl]-L-lysyl-[protein] + 4 Fe(3+) + 2 hydrogen sulfide + 2 5'-deoxyadenosine + 2 L-methionine + 2 reduced [2Fe-2S]-[ferredoxin]. It functions in the pathway protein modification; protein lipoylation via endogenous pathway; protein N(6)-(lipoyl)lysine from octanoyl-[acyl-carrier-protein]: step 2/2. Catalyzes the radical-mediated insertion of two sulfur atoms into the C-6 and C-8 positions of the octanoyl moiety bound to the lipoyl domains of lipoate-dependent enzymes, thereby converting the octanoylated domains into lipoylated derivatives. This is Lipoyl synthase from Nitrosospira multiformis (strain ATCC 25196 / NCIMB 11849 / C 71).